We begin with the raw amino-acid sequence, 267 residues long: Protein HesA, heterocyst (267 aa).

This sequence belongs to the HesA/MoeB/ThiF family.

This Trichormus variabilis (strain ATCC 29413 / PCC 7937) (Anabaena variabilis) protein is Protein HesA, heterocyst (hesA1).